We begin with the raw amino-acid sequence, 285 residues long: Extracellular metalloprotease SMAC_06893 (285 aa).

An N-terminal signal peptide occupies residues 1-18 (MQIKSLLLAAAAAPAALG). H197 lines the Zn(2+) pocket. The active site involves E198. H201 is a binding site for Zn(2+). The cysteines at positions 233 and 260 are disulfide-linked. N282 carries an N-linked (GlcNAc...) asparagine glycan.

This sequence belongs to the peptidase M43B family.

It localises to the secreted. Functionally, secreted metalloproteinase that allows assimilation of proteinaceous substrates. This chain is Extracellular metalloprotease SMAC_06893, found in Sordaria macrospora (strain ATCC MYA-333 / DSM 997 / K(L3346) / K-hell).